We begin with the raw amino-acid sequence, 164 residues long: Transcription factor E (164 aa).

Residues 5-87 form the HTH TFE/IIEalpha-type domain; it reads NDKVIRGYLL…LWRLDFSDIE (83 aa).

The protein belongs to the TFE family. Monomer. Interaction with RNA polymerase subunits RpoF and RpoE is necessary for Tfe stimulatory transcription activity. Able to interact with Tbp and RNA polymerase in the absence of DNA promoter. Interacts both with the preinitiation and elongation complexes.

Functionally, transcription factor that plays a role in the activation of archaeal genes transcribed by RNA polymerase. Facilitates transcription initiation by enhancing TATA-box recognition by TATA-box-binding protein (Tbp), and transcription factor B (Tfb) and RNA polymerase recruitment. Not absolutely required for transcription in vitro, but particularly important in cases where Tbp or Tfb function is not optimal. It dynamically alters the nucleic acid-binding properties of RNA polymerases by stabilizing the initiation complex and destabilizing elongation complexes. Seems to translocate with the RNA polymerase following initiation and acts by binding to the non template strand of the transcription bubble in elongation complexes. The chain is Transcription factor E from Methanosarcina barkeri (strain Fusaro / DSM 804).